We begin with the raw amino-acid sequence, 432 residues long: uncharacterized protein (432 aa).

Residue K243 is modified to N6-(pyridoxal phosphate)lysine.

This sequence belongs to the class-II pyridoxal-phosphate-dependent aminotransferase family. Pyridoxal 5'-phosphate is required as a cofactor.

The protein resides in the cytoplasm. This is an uncharacterized protein from Methanocaldococcus jannaschii (strain ATCC 43067 / DSM 2661 / JAL-1 / JCM 10045 / NBRC 100440) (Methanococcus jannaschii).